The primary structure comprises 471 residues: Putative multidrug resistance protein MdtD (471 aa).

Residues 1 to 11 are Periplasmic-facing; it reads MTDLPDSTRWQ. A helical membrane pass occupies residues 12–32; that stretch reads LWIVAFGFFMQSLDTTIVNTA. The Cytoplasmic portion of the chain corresponds to 33–48; it reads LPSMAQSLGESPLHMH. The helical transmembrane segment at 49-69 threads the bilayer; that stretch reads MVIVSYVLTVAVMLPASGWLA. The Periplasmic portion of the chain corresponds to 70–76; the sequence is DKVGVRN. The helical transmembrane segment at 77–97 threads the bilayer; the sequence is IFFTAIVLFTLGSLFCALSGT. Topologically, residues 98 to 101 are cytoplasmic; it reads LNEL. The helical transmembrane segment at 102-124 threads the bilayer; the sequence is LLARALQGVGGAMMVPVGRLTVM. The Periplasmic portion of the chain corresponds to 125-137; the sequence is KIVPREQYMAAMT. The helical transmembrane segment at 138-158 threads the bilayer; that stretch reads FVTLPGQVGPLLGPALGGLLV. The Cytoplasmic portion of the chain corresponds to 159 to 164; that stretch reads EYASWH. Residues 165–185 traverse the membrane as a helical segment; it reads WIFLINIPVGIIGAIATLLLM. Residues 186-196 are Periplasmic-facing; that stretch reads PNYTMQTRRFD. The helical transmembrane segment at 197 to 217 threads the bilayer; sequence LSGFLLLAVGMAVLTLALDGS. The Cytoplasmic portion of the chain corresponds to 218–224; that stretch reads KGTGLSP. A helical transmembrane segment spans residues 225 to 245; sequence LTIAGLVAVGVVALVLYLLHA. Over 246 to 262 the chain is Periplasmic; that stretch reads RNNNRALFSLKLFRTRT. The chain crosses the membrane as a helical span at residues 263–283; the sequence is FSLGLAGSFAGRIGSGMLPFM. The Cytoplasmic portion of the chain corresponds to 284–285; it reads TP. Residues 286-306 form a helical membrane-spanning segment; the sequence is VFLQIGLGFSPFHAGLMMIPM. The Periplasmic segment spans residues 307 to 341; that stretch reads VLGSMGMKRIVVQVVNRFGYRRVLVATTLGLSLVT. Residues 342–362 form a helical membrane-spanning segment; it reads LLFMTTALLGWYYVLPFVLFL. Topologically, residues 363–395 are cytoplasmic; it reads QGMVNSTRFSSMNTLTLKDLPDNLASSGNSLLS. A helical membrane pass occupies residues 396–416; it reads MIMQLSMSIGVTIAGLLLGLF. Residues 417 to 430 are Periplasmic-facing; that stretch reads GSQHVSVDSGTTQT. The helical transmembrane segment at 431–451 threads the bilayer; it reads VFMYTWLSMALIIALPAFIFA. Over 452-471 the chain is Cytoplasmic; that stretch reads RVPNDTHQNVAISRRKRSAQ.

This sequence belongs to the major facilitator superfamily. TCR/Tet family.

The protein resides in the cell inner membrane. The sequence is that of Putative multidrug resistance protein MdtD from Escherichia coli (strain K12 / MC4100 / BW2952).